The following is a 294-amino-acid chain: UPF0761 membrane protein YPN_0254 (294 aa).

The next 7 membrane-spanning stretches (helical) occupy residues 44–64 (LLSLVPLITVIFALFAAFPMF), 67–87 (ISIKLKAFIFANFMPATGDII), 108–128 (GLIVTALLLIYSVDSVLNIIW), 136–156 (LVFSFAVYWMVLTLGPILVGA), 185–205 (VFPLLISWVSFWLLYSVVPTV), 212–232 (ALIGALVAALLFELGKKGFAM), and 246–266 (VLAVIPILFLWVYWSWCIVLL).

It belongs to the UPF0761 family.

The protein resides in the cell inner membrane. In Yersinia pestis bv. Antiqua (strain Nepal516), this protein is UPF0761 membrane protein YPN_0254.